The primary structure comprises 235 residues: Aspartate/glutamate leucyltransferase (235 aa).

It belongs to the R-transferase family. Bpt subfamily.

It is found in the cytoplasm. It carries out the reaction N-terminal L-glutamyl-[protein] + L-leucyl-tRNA(Leu) = N-terminal L-leucyl-L-glutamyl-[protein] + tRNA(Leu) + H(+). The catalysed reaction is N-terminal L-aspartyl-[protein] + L-leucyl-tRNA(Leu) = N-terminal L-leucyl-L-aspartyl-[protein] + tRNA(Leu) + H(+). In terms of biological role, functions in the N-end rule pathway of protein degradation where it conjugates Leu from its aminoacyl-tRNA to the N-termini of proteins containing an N-terminal aspartate or glutamate. The chain is Aspartate/glutamate leucyltransferase from Pseudomonas entomophila (strain L48).